The following is an 85-amino-acid chain: Putative transmembrane protein ORF28 (85 aa).

2 consecutive transmembrane segments (helical) span residues 32–52 (IMLL…VQIV) and 59–79 (LLSV…MLGI).

Its subcellular location is the host membrane. This is Putative transmembrane protein ORF28 from Haloarcula hispanica (His1V).